The chain runs to 553 residues: Solute carrier family 45 member 3 (553 aa).

Transmembrane regions (helical) follow at residues 19–39 (LLIN…ITYV), 52–72 (FMTM…PLLG), 88–108 (FIWA…RAGW), 120–140 (LELA…QVCF), 161–181 (YSVY…LPAI), 198–218 (CLFG…LLVA), 275–295 (FVAE…YTDF), 323–343 (MGSL…LVMD), 353–373 (AVYL…CLSH), 382–402 (AALT…LASL), and 522–542 (AYMV…TQVV).

This sequence belongs to the glycoside-pentoside-hexuronide (GPH) cation symporter transporter (TC 2.A.2) family.

The protein resides in the membrane. The catalysed reaction is sucrose(out) + H(+)(out) = sucrose(in) + H(+)(in). Its function is as follows. Proton-associated sucrose transporter. May be able to transport also glucose and fructose. This Macaca fascicularis (Crab-eating macaque) protein is Solute carrier family 45 member 3 (SLC45A3).